The sequence spans 277 residues: Putative thiosulfate sulfurtransferase (277 aa).

Rhodanese domains are found at residues 18 to 125 (DSAN…PLST) and 154 to 274 (SIKI…VPIE). Cys233 acts as the Cysteine persulfide intermediate in catalysis. Arg238 contacts substrate.

It carries out the reaction thiosulfate + hydrogen cyanide = thiocyanate + sulfite + 2 H(+). May be a sulfotransferase involved in the formation of thiosulfate. In Mycobacterium leprae (strain TN), this protein is Putative thiosulfate sulfurtransferase (cysA).